We begin with the raw amino-acid sequence, 781 residues long: uncharacterized protein (781 aa).

Residues 1–34 are disordered; it reads MNIAEEPSDEVISSGPEDTDICSQQTSASAEAGD. S29 carries the post-translational modification Phosphoserine. RRM domains follow at residues 195–273 and 295–418; these read GNIF…YHVE and RCLF…KAVQ. The segment at 345 to 375 is disordered; it reads SNTRSSSSVSFNEEGSVESNKSSNNTNGNAQ. Positions 347–364 are enriched in low complexity; it reads TRSSSSVSFNEEGSVESN. Residues 365–374 are compositionally biased toward polar residues; that stretch reads KSSNNTNGNA. 4 positions are modified to phosphoserine: S433, S435, S482, and S485. A Phosphothreonine modification is found at T486. Residue S501 is modified to Phosphoserine. One can recognise an RRM 3 domain in the interval 540–638; that stretch reads SNLYVKHIPL…QVLSVSFAQK (99 aa). Residues 640 to 668 form a disordered region; it reads GNLSSSDDDDQSQTDNSSKFQNFQPHNDY.

In terms of assembly, interacts with RBG1.

This is an uncharacterized protein from Saccharomyces cerevisiae (strain ATCC 204508 / S288c) (Baker's yeast).